The primary structure comprises 341 residues: Glycerol-3-phosphate dehydrogenase [NAD(P)+] 1 (341 aa).

The NADPH site is built by S11, W12, R32, R33, and K106. Sn-glycerol 3-phosphate contacts are provided by K106, G137, and S139. A141 contributes to the NADPH binding site. The sn-glycerol 3-phosphate site is built by K192, D245, S255, R256, and N257. The active-site Proton acceptor is K192. An NADPH-binding site is contributed by R256. NADPH-binding residues include V280 and E282.

The protein belongs to the NAD-dependent glycerol-3-phosphate dehydrogenase family.

The protein resides in the cytoplasm. The catalysed reaction is sn-glycerol 3-phosphate + NAD(+) = dihydroxyacetone phosphate + NADH + H(+). The enzyme catalyses sn-glycerol 3-phosphate + NADP(+) = dihydroxyacetone phosphate + NADPH + H(+). The protein operates within membrane lipid metabolism; glycerophospholipid metabolism. Functionally, catalyzes the reduction of the glycolytic intermediate dihydroxyacetone phosphate (DHAP) to sn-glycerol 3-phosphate (G3P), the key precursor for phospholipid synthesis. This Salinibacter ruber (strain DSM 13855 / M31) protein is Glycerol-3-phosphate dehydrogenase [NAD(P)+] 1.